The following is a 422-amino-acid chain: Glutamyl-tRNA reductase (422 aa).

Substrate contacts are provided by residues 49–52, serine 107, 112–114, and glutamine 118; these read TCNR and EPQ. The active-site Nucleophile is the cysteine 50. 187 to 192 provides a ligand contact to NADP(+); that stretch reads GAGETI.

The protein belongs to the glutamyl-tRNA reductase family. As to quaternary structure, homodimer.

It carries out the reaction (S)-4-amino-5-oxopentanoate + tRNA(Glu) + NADP(+) = L-glutamyl-tRNA(Glu) + NADPH + H(+). The protein operates within porphyrin-containing compound metabolism; protoporphyrin-IX biosynthesis; 5-aminolevulinate from L-glutamyl-tRNA(Glu): step 1/2. Its function is as follows. Catalyzes the NADPH-dependent reduction of glutamyl-tRNA(Glu) to glutamate 1-semialdehyde (GSA). This chain is Glutamyl-tRNA reductase, found in Pseudomonas paraeruginosa (strain DSM 24068 / PA7) (Pseudomonas aeruginosa (strain PA7)).